Reading from the N-terminus, the 267-residue chain is 2-keto-3-deoxy-L-rhamnonate aldolase (267 aa).

Catalysis depends on H49, which acts as the Proton acceptor. Q151 provides a ligand contact to substrate. Residue E153 participates in Mg(2+) binding. Residues A178 and D179 each coordinate substrate. D179 is a binding site for Mg(2+).

This sequence belongs to the HpcH/HpaI aldolase family. KDR aldolase subfamily. Homohexamer. Requires Mg(2+) as cofactor.

It catalyses the reaction 2-dehydro-3-deoxy-L-rhamnonate = (S)-lactaldehyde + pyruvate. Functionally, catalyzes the reversible retro-aldol cleavage of 2-keto-3-deoxy-L-rhamnonate (KDR) to pyruvate and lactaldehyde. The sequence is that of 2-keto-3-deoxy-L-rhamnonate aldolase from Salmonella gallinarum (strain 287/91 / NCTC 13346).